We begin with the raw amino-acid sequence, 267 residues long: Protein HesA, heterocyst (267 aa).

Belongs to the HesA/MoeB/ThiF family.

This Trichormus variabilis (strain ATCC 29413 / PCC 7937) (Anabaena variabilis) protein is Protein HesA, heterocyst (hesA1).